The following is a 295-amino-acid chain: Xyloglucan endotransglucosylase protein 2 (295 aa).

The signal sequence occupies residues 1–23 (MAMGTHFGGLWLALLCMVSATMG). Positions 24–222 (AVPRKPVDVP…WSKAPFVASY (199 aa)) constitute a GH16 domain. Glu108 functions as the Nucleophile in the catalytic mechanism. Glu112 acts as the Proton donor in catalysis. Glu112 lines the xyloglucan pocket. N-linked (GlcNAc...) asparagine glycosylation is present at Asn116. Residues 125–127 (QTN), 135–137 (DRE), 201–202 (DW), and Gly206 each bind xyloglucan. Intrachain disulfides connect Cys230–Cys239 and Cys276–Cys289. A xyloglucan-binding site is contributed by Arg281.

Belongs to the glycosyl hydrolase 16 family. XTH group 1 subfamily. In terms of processing, contains at least one intrachain disulfide bond essential for its enzymatic activity. In terms of tissue distribution, expressed in fruit pulp.

Its subcellular location is the secreted. It localises to the cell wall. The protein resides in the extracellular space. The protein localises to the apoplast. The catalysed reaction is breaks a beta-(1-&gt;4) bond in the backbone of a xyloglucan and transfers the xyloglucanyl segment on to O-4 of the non-reducing terminal glucose residue of an acceptor, which can be a xyloglucan or an oligosaccharide of xyloglucan.. In terms of biological role, catalyzes xyloglucan endotransglycosylation (XET). Cleaves and religates xyloglucan polymers. Does not catalyze xyloglucan endohydrolysis (XEH). Probably involved in cell wall restructuring during fruit ripening and postharvest fruit softening. The sequence is that of Xyloglucan endotransglucosylase protein 2 from Diospyros kaki (Kaki persimmon).